The sequence spans 489 residues: Betaine aldehyde dehydrogenase (489 aa).

The K(+) site is built by Thr26 and Asp93. Residue 150–152 coordinates NAD(+); that stretch reads GAW. Catalysis depends on Lys162, which acts as the Charge relay system. Residue 176–179 coordinates NAD(+); that stretch reads KPSE. Residue Val180 participates in K(+) binding. 229 to 232 contacts NAD(+); that stretch reads GVET. K(+) is bound at residue Leu245. The active-site Proton acceptor is the Glu251. Gly253, Cys285, and Glu386 together coordinate NAD(+). Cys285 (nucleophile) is an active-site residue. Cys285 carries the post-translational modification Cysteine sulfenic acid (-SOH). The K(+) site is built by Lys456 and Gly459. The Charge relay system role is filled by Glu463.

It belongs to the aldehyde dehydrogenase family. As to quaternary structure, dimer of dimers. K(+) serves as cofactor.

It catalyses the reaction betaine aldehyde + NAD(+) + H2O = glycine betaine + NADH + 2 H(+). It participates in amine and polyamine biosynthesis; betaine biosynthesis via choline pathway; betaine from betaine aldehyde: step 1/1. Its function is as follows. Involved in the biosynthesis of the osmoprotectant glycine betaine. Catalyzes the irreversible oxidation of betaine aldehyde to the corresponding acid. The sequence is that of Betaine aldehyde dehydrogenase from Burkholderia cenocepacia (strain ATCC BAA-245 / DSM 16553 / LMG 16656 / NCTC 13227 / J2315 / CF5610) (Burkholderia cepacia (strain J2315)).